The primary structure comprises 273 residues: Formamidopyrimidine-DNA glycosylase (273 aa).

P2 (schiff-base intermediate with DNA) is an active-site residue. Catalysis depends on E3, which acts as the Proton donor. K58 acts as the Proton donor; for beta-elimination activity in catalysis. DNA contacts are provided by H91 and R110. The FPG-type zinc finger occupies 238 to 272 (QVYGKTGQPCPRCGCLIKKIKVGGRGTHYCPRCQC). Catalysis depends on R262, which acts as the Proton donor; for delta-elimination activity.

The protein belongs to the FPG family. In terms of assembly, monomer. It depends on Zn(2+) as a cofactor.

The catalysed reaction is Hydrolysis of DNA containing ring-opened 7-methylguanine residues, releasing 2,6-diamino-4-hydroxy-5-(N-methyl)formamidopyrimidine.. It catalyses the reaction 2'-deoxyribonucleotide-(2'-deoxyribose 5'-phosphate)-2'-deoxyribonucleotide-DNA = a 3'-end 2'-deoxyribonucleotide-(2,3-dehydro-2,3-deoxyribose 5'-phosphate)-DNA + a 5'-end 5'-phospho-2'-deoxyribonucleoside-DNA + H(+). Its function is as follows. Involved in base excision repair of DNA damaged by oxidation or by mutagenic agents. Acts as a DNA glycosylase that recognizes and removes damaged bases. Has a preference for oxidized purines, such as 7,8-dihydro-8-oxoguanine (8-oxoG). Has AP (apurinic/apyrimidinic) lyase activity and introduces nicks in the DNA strand. Cleaves the DNA backbone by beta-delta elimination to generate a single-strand break at the site of the removed base with both 3'- and 5'-phosphates. The polypeptide is Formamidopyrimidine-DNA glycosylase (Streptococcus agalactiae serotype Ia (strain ATCC 27591 / A909 / CDC SS700)).